Consider the following 434-residue polypeptide: UDP-glucose 6-dehydrogenase (434 aa).

Residues 2–19, Val-11, Asp-30, Lys-35, Thr-121, and Glu-152 each bind NAD(+); that span reads NITFIGSGYVGLVSGIIM. Substrate is bound by residues 148–152, Lys-204, Asn-208, 249–253, and Gly-257; these read EFLRE and FLNAG. Residue Cys-260 is the Nucleophile of the active site. Lys-263 is an NAD(+) binding site. Residue Lys-321 coordinates substrate. Arg-328 provides a ligand contact to NAD(+).

The protein belongs to the UDP-glucose/GDP-mannose dehydrogenase family.

It catalyses the reaction UDP-alpha-D-glucose + 2 NAD(+) + H2O = UDP-alpha-D-glucuronate + 2 NADH + 3 H(+). It functions in the pathway nucleotide-sugar biosynthesis; UDP-alpha-D-glucuronate biosynthesis; UDP-alpha-D-glucuronate from UDP-alpha-D-glucose: step 1/1. The sequence is that of UDP-glucose 6-dehydrogenase (udg) from Rickettsia prowazekii (strain Madrid E).